We begin with the raw amino-acid sequence, 336 residues long: Eukaryotic translation initiation factor 3 subunit I (336 aa).

WD repeat units lie at residues 8-49, 50-91, 93-135, 144-183, 187-226, and 285-324; these read GHER…GTYN, GHNG…KAWE, PTAI…GPQP, PIGS…EVAS, NHIG…VIKS, and GGFG…FRAK.

It belongs to the eIF-3 subunit I family. As to quaternary structure, component of the eukaryotic translation initiation factor 3 (eIF-3) complex.

Its subcellular location is the cytoplasm. Its function is as follows. Component of the eukaryotic translation initiation factor 3 (eIF-3) complex, which is involved in protein synthesis of a specialized repertoire of mRNAs and, together with other initiation factors, stimulates binding of mRNA and methionyl-tRNAi to the 40S ribosome. The eIF-3 complex specifically targets and initiates translation of a subset of mRNAs involved in cell proliferation. The protein is Eukaryotic translation initiation factor 3 subunit I of Puccinia graminis f. sp. tritici (strain CRL 75-36-700-3 / race SCCL) (Black stem rust fungus).